The following is a 140-amino-acid chain: Nucleoside diphosphate kinase (140 aa).

ATP contacts are provided by Lys11, Phe59, Arg87, Thr93, Arg104, and Asn114. His117 (pros-phosphohistidine intermediate) is an active-site residue.

This sequence belongs to the NDK family. In terms of assembly, homotetramer. Mg(2+) serves as cofactor.

The protein localises to the cytoplasm. The enzyme catalyses a 2'-deoxyribonucleoside 5'-diphosphate + ATP = a 2'-deoxyribonucleoside 5'-triphosphate + ADP. It carries out the reaction a ribonucleoside 5'-diphosphate + ATP = a ribonucleoside 5'-triphosphate + ADP. Major role in the synthesis of nucleoside triphosphates other than ATP. The ATP gamma phosphate is transferred to the NDP beta phosphate via a ping-pong mechanism, using a phosphorylated active-site intermediate. The chain is Nucleoside diphosphate kinase from Rhodopseudomonas palustris (strain ATCC BAA-98 / CGA009).